The chain runs to 257 residues: Head fiber protein (257 aa).

The protein localises to the virion. This Bacillus phage Nf (Bacteriophage Nf) protein is Head fiber protein (8.5).